Reading from the N-terminus, the 128-residue chain is MYDNLKSLGITNPDEIDRYSLRQEANNDILKIYFQKDKGEFFAKSVKFKYPRQRKTVVADGVGQGYKEVQEISPNLRYVIDELDQICQRDRTEIDLKRKILDDLRHLESVVTNKISEIEADLEKLTRK.

The protein belongs to the UPF0325 family.

The chain is UPF0325 protein KPN78578_01770 from Klebsiella pneumoniae subsp. pneumoniae (strain ATCC 700721 / MGH 78578).